The primary structure comprises 285 residues: Putative pyruvate, phosphate dikinase regulatory protein (285 aa).

An ADP-binding site is contributed by G165–T172.

It belongs to the pyruvate, phosphate/water dikinase regulatory protein family. PDRP subfamily.

The enzyme catalyses N(tele)-phospho-L-histidyl/L-threonyl-[pyruvate, phosphate dikinase] + ADP = N(tele)-phospho-L-histidyl/O-phospho-L-threonyl-[pyruvate, phosphate dikinase] + AMP + H(+). The catalysed reaction is N(tele)-phospho-L-histidyl/O-phospho-L-threonyl-[pyruvate, phosphate dikinase] + phosphate + H(+) = N(tele)-phospho-L-histidyl/L-threonyl-[pyruvate, phosphate dikinase] + diphosphate. Bifunctional serine/threonine kinase and phosphorylase involved in the regulation of the pyruvate, phosphate dikinase (PPDK) by catalyzing its phosphorylation/dephosphorylation. The chain is Putative pyruvate, phosphate dikinase regulatory protein from Lactobacillus delbrueckii subsp. bulgaricus (strain ATCC BAA-365 / Lb-18).